A 1025-amino-acid chain; its full sequence is Myosin phosphatase Rho-interacting protein (1025 aa).

The interval 2–383 is interaction with F-actin; that stretch reads SAAKENPCRK…DRRSTEPSVT (382 aa). Residues 43–150 enclose the PH 1 domain; that stretch reads KPIYGGWLLL…WLEMLMVYPR (108 aa). 2 disordered regions span residues 152-302 and 317-383; these read NKQN…RRSQ and HMET…PSVT. The segment covering 179–189 has biased composition (low complexity); it reads SSSSSSSSSSS. A phosphoserine mark is found at Ser-192, Ser-217, Ser-218, Ser-220, Ser-224, and Ser-226. Low complexity predominate over residues 217 to 236; sequence SSLSPAQSPSQSQPPAASSL. A compositionally biased stretch (basic and acidic residues) spans 239 to 263; the sequence is PGLESKEEESAMSSDRMDCGRKVRV. Residues Ser-265 and Ser-269 each carry the phosphoserine modification. Over residues 271-281 the composition is skewed to basic and acidic residues; sequence EKTKQDLKAEE. Residues 284–294 are compositionally biased toward pro residues; sequence LPPPLSPPSPS. A phosphoserine mark is found at Ser-289 and Ser-292. A Phosphothreonine modification is found at Thr-295. Ser-326 carries the post-translational modification Phosphoserine. Residues 332–348 are compositionally biased toward basic and acidic residues; sequence RQGRSEKRAFPRKRDFT. Thr-348 carries the phosphothreonine modification. A phosphoserine mark is found at Ser-362 and Ser-365. The PH 2 domain maps to 387-483; it reads LNFKKGWLTK…WIQTIMKHVH (97 aa). Disordered regions lie at residues 485–545 and 560–591; these read TTAP…TFDW and VGGV…RREE. Ser-493 is subject to Phosphoserine. Composition is skewed to basic and acidic residues over residues 524–545 and 567–589; these read PEQK…TFDW and DTHE…ARRR. The interaction with RHOA stretch occupies residues 546-824; sequence AEFRPIQQAL…SVQRELEVLS (279 aa). Ser-619 is modified (phosphoserine). Thr-646 is subject to Phosphothreonine. A phosphoserine mark is found at Ser-663 and Ser-800. The stretch at 673–977 forms a coiled coil; it reads HELTSLLEKE…AATEALGEKS (305 aa). Positions 824–879 are interaction with PPP1R12A; sequence SEQYSQKCLENAHLAQALEAERQALRQCQRENQELNAHNQELNNRLAAEITRLRTL. Phosphoserine is present on residues Ser-891, Ser-977, Ser-993, Ser-1014, and Ser-1016.

As to quaternary structure, binds F-actin through its N-terminus. Interacts with MYZAP. Binds RHOA, PPP1R12A/MBS and PPP1R12C/MBS85 through adjacent coiled coil domains.

The protein localises to the cytoplasm. It is found in the cytoskeleton. In terms of biological role, targets myosin phosphatase to the actin cytoskeleton. Required for the regulation of the actin cytoskeleton by RhoA and ROCK1. Depletion leads to an increased number of stress fibers in smooth muscle cells through stabilization of actin fibers by phosphorylated myosin. Overexpression of MRIP as well as its F-actin-binding region leads to disassembly of stress fibers in neuronal cells. The sequence is that of Myosin phosphatase Rho-interacting protein (MPRIP) from Homo sapiens (Human).